The primary structure comprises 61 residues: Metallothionein-1D (61 aa).

Residues 1-29 form a beta region; that stretch reads MDPNCSCSTGGSCSCATSCTCKACRCTSC. Positions 5, 7, 13, 15, 19, 21, 24, 26, 29, 33, 34, 36, 37, 41, 44, 48, 50, 57, 59, and 60 each coordinate a divalent metal cation. The segment at 30 to 61 is alpha; the sequence is KKSCCSCCPAGCAKCAQGCICKGASDKCSCCA.

Belongs to the metallothionein superfamily. Type 1 family. As to quaternary structure, monomer.

Functionally, metallothioneins have a high content of cysteine residues that bind various heavy metals; these proteins are transcriptionally regulated by both heavy metals and glucocorticoids. The polypeptide is Metallothionein-1D (MT1D) (Sus scrofa (Pig)).